A 457-amino-acid polypeptide reads, in one-letter code: Cysteine desulfurase (457 aa).

Pyridoxal 5'-phosphate-binding residues include alanine 127, threonine 128, glutamine 235, serine 255, and histidine 257. Lysine 258 carries the post-translational modification N6-(pyridoxal phosphate)lysine. Threonine 295 lines the pyridoxal 5'-phosphate pocket. Cysteine 381 serves as the catalytic Cysteine persulfide intermediate. Cysteine 381 is a [2Fe-2S] cluster binding site. Cysteine 381 lines the Zn(2+) pocket. Cysteine 381 bears the Cysteine persulfide mark.

It belongs to the class-V pyridoxal-phosphate-dependent aminotransferase family. NifS/IscS subfamily. As to quaternary structure, homodimer. Component of the mitochondrial core iron-sulfur cluster (ISC) complex composed of NFS1, LYRM4, NDUFAB1, ISCU, FXN, and FDX2; this complex is a heterohexamer containing two copies of each monomer. Component of cyteine desulfurase complex composed of NFS1, LYRM4 and NDUFAB1; this complex contributes to the activation of cysteine desulfurase activity and NFS1 stabilization. Interacts (homodimer form) with ISCU (D-state); each monomer interacts with the C-terminal regions of each NFS1 monomer. Interacts with HSPA9. Interacts (via homodimer form) with FDX2. Interacts (via homodimer form) with FXN. Interacts with LYRM4. Component of a complex composed of FXN, NFS1, LYRM4 and ISCU. Monomer. Homodimer. Oligomer. Interacts with ISCU. Component of the cysteine desulfurase complex composed of NFS1 and LYRM4; this complex contributes to the activation of cysteine desulfurase activity. Interacts with MOCS3. Pyridoxal 5'-phosphate serves as cofactor. Post-translationally, N-gluconoylated. Cysteine persulfide intermediate is reduced by thiol-containing molecules like glutathione and L-cysteine. Persulfide reduction is a rate-limiting step of cysteine desulfurase catalytic cycle.

It is found in the mitochondrion. The protein resides in the cytoplasm. Its subcellular location is the nucleus. It localises to the cytoskeleton. The protein localises to the microtubule organizing center. It is found in the centrosome. The catalysed reaction is (sulfur carrier)-H + L-cysteine = (sulfur carrier)-SH + L-alanine. The enzyme catalyses L-cysteinyl-[cysteine desulfurase] + L-cysteine = S-sulfanyl-L-cysteinyl-[cysteine desulfurase] + L-alanine. With respect to regulation, active only in complex with LYRM4. Its function is as follows. Cysteine desulfurase, of the core iron-sulfur cluster (ISC) assembly complex, that catalyzes the desulfuration of L-cysteine to L-alanine, as component of the cysteine desulfurase complex leading to the formation of a cysteine persulfide intermediate at the active site cysteine residue and participates in the [2Fe-2S] clusters assembly on the scaffolding protein ISCU. The persulfide is then transferred on the flexible Cys loop from the catalytic site of NFS1 to the surface of NFS1. After the NFS1-linked persulfide sulfur is transferred to one of the conserved Cys residues of the scaffold, a reaction assisted by FXN. The core iron-sulfur cluster (ISC) assembly complex is involved in the de novo synthesis of a [2Fe-2S] cluster, the first step of the mitochondrial iron-sulfur protein biogenesis. This process is initiated by the cysteine desulfurase complex (NFS1:LYRM4:NDUFAB1) that produces persulfide which is delivered on the scaffold protein ISCU in a FXN-dependent manner. Then this complex is stabilized by FDX2 which provides reducing equivalents to accomplish the [2Fe-2S] cluster assembly. Finally, the [2Fe-2S] cluster is transferred from ISCU to chaperone proteins, including HSCB, HSPA9 and GLRX5. May catalyze the desulfuration of L-cysteine to L-alanine as component of the cysteine desulfurase complex (NFS1:LYRM4), leading to the formation of a cysteine persulfide intermediate. Acts as a sulfur donor for MOCS3 by transferring the sulfur of the cysteine persulfide intermediate on MOCS3. The polypeptide is Cysteine desulfurase (Pongo abelii (Sumatran orangutan)).